The sequence spans 189 residues: Probable nicotinate-nucleotide adenylyltransferase (189 aa).

Belongs to the NadD family.

It catalyses the reaction nicotinate beta-D-ribonucleotide + ATP + H(+) = deamido-NAD(+) + diphosphate. Its pathway is cofactor biosynthesis; NAD(+) biosynthesis; deamido-NAD(+) from nicotinate D-ribonucleotide: step 1/1. Its function is as follows. Catalyzes the reversible adenylation of nicotinate mononucleotide (NaMN) to nicotinic acid adenine dinucleotide (NaAD). In Ruegeria sp. (strain TM1040) (Silicibacter sp.), this protein is Probable nicotinate-nucleotide adenylyltransferase.